The chain runs to 339 residues: Probable N5-carboxyaminoimidazole ribonucleotide mutase (339 aa).

Positions 11, 14, and 41 each coordinate substrate.

This sequence belongs to the AIR carboxylase family. Class I subfamily.

The enzyme catalyses 5-carboxyamino-1-(5-phospho-D-ribosyl)imidazole + H(+) = 5-amino-1-(5-phospho-D-ribosyl)imidazole-4-carboxylate. It participates in purine metabolism; IMP biosynthesis via de novo pathway; 5-amino-1-(5-phospho-D-ribosyl)imidazole-4-carboxylate from 5-amino-1-(5-phospho-D-ribosyl)imidazole (N5-CAIR route): step 2/2. In terms of biological role, catalyzes the conversion of N5-carboxyaminoimidazole ribonucleotide (N5-CAIR) to 4-carboxy-5-aminoimidazole ribonucleotide (CAIR). This chain is Probable N5-carboxyaminoimidazole ribonucleotide mutase, found in Methanobrevibacter smithii.